A 161-amino-acid polypeptide reads, in one-letter code: Ribosome maturation factor RimP (161 aa).

This sequence belongs to the RimP family.

Its subcellular location is the cytoplasm. Required for maturation of 30S ribosomal subunits. The protein is Ribosome maturation factor RimP of Rickettsia conorii (strain ATCC VR-613 / Malish 7).